A 57-amino-acid chain; its full sequence is Large ribosomal subunit protein bL32 (57 aa).

A disordered region spans residues 1–23 (MAVPKKKTSKSKRDKRRATWRHK).

Belongs to the bacterial ribosomal protein bL32 family.

The chain is Large ribosomal subunit protein bL32 from Nostoc sp. (strain PCC 7120 / SAG 25.82 / UTEX 2576).